Here is a 148-residue protein sequence, read N- to C-terminus: UPF0260 protein YE2365 (148 aa).

This sequence belongs to the UPF0260 family.

The polypeptide is UPF0260 protein YE2365 (Yersinia enterocolitica serotype O:8 / biotype 1B (strain NCTC 13174 / 8081)).